Consider the following 471-residue polypeptide: 5-hydroxytryptamine receptor 2A (471 aa).

The Extracellular portion of the chain corresponds to 1-80 (MEILCEDNTS…LQEKNWSALL (80 aa)). N-linked (GlcNAc...) asparagine glycans are attached at residues N8, N38, N44, N51, and N54. The helical transmembrane segment at 81–97 (TAVVIILTIAGNILVIM) threads the bilayer. Over 98–111 (AVSLEKKLQNATNY) the chain is Cytoplasmic. The helical transmembrane segment at 112 to 137 (FLMSLAIADMLLGFLVMPVSMLTILY) threads the bilayer. Topologically, residues 138–146 (GYRWPLPSK) are extracellular. A helical membrane pass occupies residues 147–171 (LCAVWIYLDVLFSTASIMHLCAISL). C148 and C227 form a disulfide bridge. D155 is a serotonin binding site. The DRY motif; important for ligand-induced conformation changes signature appears at 172–174 (DRY). The Cytoplasmic portion of the chain corresponds to 172 to 191 (DRYVAIQNPIHHSRFNSRTK). Residues 192–215 (AFLKIIAVWTISVGVSMPIPVFGL) traverse the membrane as a helical segment. Topologically, residues 216–232 (QDDSKVFKQGSCLLADD) are extracellular. A helical transmembrane segment spans residues 233 to 258 (NFVLIGSFVAFFIPLTIMVITYFLTI). Topologically, residues 259–322 (KSLQKEATLC…QSISNEQKAC (64 aa)) are cytoplasmic. A Phosphoserine modification is found at S280. Residues 323–348 (KVLGIVFFLFVVMWCPFFITNIMAVI) traverse the membrane as a helical segment. N343 serves as a coordination point for serotonin. C349 and C353 are oxidised to a cystine. Over 349–356 (CKESCNEH) the chain is Extracellular. Residues 357 to 382 (VIGALLNVFVWIGYLSSAVNPLVYTL) form a helical membrane-spanning segment. Positions 376–380 (NPLVY) match the NPxxY motif; important for ligand-induced conformation changes and signaling motif. At 383 to 471 (FNKTYRSAFS…NTVNEKVSCV (89 aa)) the chain is on the cytoplasmic side. A PDZ-binding motif is present at residues 469 to 471 (SCV).

Belongs to the G-protein coupled receptor 1 family. Interacts (via C-terminus) with MPDZ and PATJ. May interact (via C-terminus) with MPP3, PRDX6, DLG4, DLG1, CASK, APBA1 and MAGI2. Interacts with GRM2 and DRD2; this may affect signaling.

The protein resides in the cell membrane. The protein localises to the cell projection. Its subcellular location is the dendrite. It localises to the axon. It is found in the cytoplasmic vesicle. The protein resides in the membrane. The protein localises to the caveola. Its subcellular location is the presynapse. With respect to regulation, G-protein coupled receptor activity is regulated by lipids: oleamide increases HTR2A-mediated activity. In terms of biological role, G-protein coupled receptor for 5-hydroxytryptamine (serotonin). Also functions as a receptor for various drugs and psychoactive substances, including mescaline, psilocybin, 1-(2,5-dimethoxy-4-iodophenyl)-2-aminopropane (DOI) and lysergic acid diethylamide (LSD). Ligand binding causes a conformation change that triggers signaling via guanine nucleotide-binding proteins (G proteins) and modulates the activity of downstream effectors. HTR2A is coupled to G(q)/G(11) G alpha proteins and activates phospholipase C-beta, releasing diacylglycerol (DAG) and inositol 1,4,5-trisphosphate (IP3) second messengers that modulate the activity of phosphatidylinositol 3-kinase and promote the release of Ca(2+) ions from intracellular stores, respectively. Beta-arrestin family members inhibit signaling via G proteins and mediate activation of alternative signaling pathways. Affects neural activity, perception, cognition and mood. Plays a role in the regulation of behavior, including responses to anxiogenic situations and psychoactive substances. Plays a role in intestinal smooth muscle contraction, and may play a role in arterial vasoconstriction. This Cricetulus griseus (Chinese hamster) protein is 5-hydroxytryptamine receptor 2A (HTR2A).